We begin with the raw amino-acid sequence, 209 residues long: Urease accessory protein UreG (209 aa).

18–25 is a GTP binding site; the sequence is GPVGSGKT.

The protein belongs to the SIMIBI class G3E GTPase family. UreG subfamily. As to quaternary structure, homodimer. UreD, UreF and UreG form a complex that acts as a GTP-hydrolysis-dependent molecular chaperone, activating the urease apoprotein by helping to assemble the nickel containing metallocenter of UreC. The UreE protein probably delivers the nickel.

The protein localises to the cytoplasm. Functionally, facilitates the functional incorporation of the urease nickel metallocenter. This process requires GTP hydrolysis, probably effectuated by UreG. The chain is Urease accessory protein UreG from Cupriavidus pinatubonensis (strain JMP 134 / LMG 1197) (Cupriavidus necator (strain JMP 134)).